The sequence spans 175 residues: MATQDSQGIKLFGKTITFNANITQTIKKEEQQQQQQPELQATTAVRSPSSDLTAEKRPDKIIPCPRCKSMETKFCYFNNYNVNQPRHFCKGCQRYWTAGGALRNVPVGAGRRKSKPPGRVGGFAELLGAATGAVDQVELDALLVEEWRAATASHGGFRHDFPVKRLRCYTDGQSC.

The interval 29–57 (EEQQQQQQPELQATTAVRSPSSDLTAEKR) is disordered. The span at 37–52 (PELQATTAVRSPSSDL) shows a compositional bias: polar residues. The segment at 62 to 116 (IPCPRCKSMETKFCYFNNYNVNQPRHFCKGCQRYWTAGGALRNVPVGAGRRKSKP) adopts a Dof-type zinc-finger fold. Positions 64, 67, 89, and 92 each coordinate Zn(2+). Positions 162–168 (PVKRLRC) match the Nuclear localization signal motif.

It is found in the nucleus. Functionally, transcription factor that binds specifically to a 5'-AA[AG]G-3' consensus core sequence. Acts as a negative regulator in the phytochrome-mediated light responses. Controls phyB-mediated end-of-day response and the phyA-mediated anthocyanin accumulation. Not involved in direct flowering time regulation. The chain is Dof zinc finger protein DOF1.5 (DOF1.5) from Arabidopsis thaliana (Mouse-ear cress).